The following is a 283-amino-acid chain: Glutamate racemase (283 aa).

Residues D28 to S29 and Y60 to G61 contribute to the substrate site. Residue C92 is the Proton donor/acceptor of the active site. N93 to T94 contacts substrate. C204 (proton donor/acceptor) is an active-site residue. T205–H206 serves as a coordination point for substrate.

This sequence belongs to the aspartate/glutamate racemases family.

The catalysed reaction is L-glutamate = D-glutamate. It functions in the pathway cell wall biogenesis; peptidoglycan biosynthesis. Functionally, provides the (R)-glutamate required for cell wall biosynthesis. This chain is Glutamate racemase, found in Salmonella enteritidis PT4 (strain P125109).